The sequence spans 137 residues: Glutamate mutase sigma subunit (137 aa).

The B12-binding domain maps to 3 to 137 (EVNLVLGVIG…KALKEDLGLM (135 aa)). Adenosylcob(III)alamin-binding positions include 13–17 (ADVHA), His16, 61–63 (SSL), and 93–97 (NLVVG).

It belongs to the methylaspartate mutase GlmS subunit family. In terms of assembly, heterotetramer composed of 2 epsilon subunits (GlmE) and 2 sigma subunits (GlmS). GlmE exists as a homodimer and GlmS as a monomer. Adenosylcob(III)alamin serves as cofactor.

It catalyses the reaction (2S,3S)-3-methyl-L-aspartate = L-glutamate. It functions in the pathway amino-acid degradation; L-glutamate degradation via mesaconate pathway; acetate and pyruvate from L-glutamate: step 1/4. Catalyzes the carbon skeleton rearrangement of L-glutamate to L-threo-3-methylaspartate ((2S,3S)-3-methylaspartate). The protein is Glutamate mutase sigma subunit of Carboxydothermus hydrogenoformans (strain ATCC BAA-161 / DSM 6008 / Z-2901).